Here is a 131-residue protein sequence, read N- to C-terminus: MATVPTRSGSPRQLTTKQTGDAWEVQARRWLEGKGLRFVAANVNERGGEIDLIMREGRTTVFVEVRYRRSALYGGAAASVTRSKQHKLLQTARLWLARHNGSFDTVDCRFDVVAFTGNEVEWIKDAFNDHS.

The segment covering 1–19 (MATVPTRSGSPRQLTTKQT) has biased composition (polar residues). Residues 1-20 (MATVPTRSGSPRQLTTKQTG) form a disordered region.

This sequence belongs to the UPF0102 family.

The sequence is that of UPF0102 protein YraN from Escherichia coli (strain 55989 / EAEC).